Consider the following 119-residue polypeptide: Holo-[acyl-carrier-protein] synthase (119 aa).

Mg(2+)-binding residues include aspartate 5 and glutamate 51.

The protein belongs to the P-Pant transferase superfamily. AcpS family. It depends on Mg(2+) as a cofactor.

It is found in the cytoplasm. The enzyme catalyses apo-[ACP] + CoA = holo-[ACP] + adenosine 3',5'-bisphosphate + H(+). Its function is as follows. Transfers the 4'-phosphopantetheine moiety from coenzyme A to a Ser of acyl-carrier-protein. In Helicobacter pylori (strain ATCC 700392 / 26695) (Campylobacter pylori), this protein is Holo-[acyl-carrier-protein] synthase.